The following is a 160-amino-acid chain: Cytochrome b6-f complex subunit 4 (160 aa).

The next 3 helical transmembrane spans lie at 36–56 (LLYIFPVVILGTIACVVGLAV), 95–115 (LLGIALQTLIPLGLMILPFIE), and 131–151 (SVFLFGTFLTIYLGIGACLPI).

The protein belongs to the cytochrome b family. PetD subfamily. As to quaternary structure, the 4 large subunits of the cytochrome b6-f complex are cytochrome b6, subunit IV (17 kDa polypeptide, PetD), cytochrome f and the Rieske protein, while the 4 small subunits are PetG, PetL, PetM and PetN. The complex functions as a dimer.

It localises to the cellular thylakoid membrane. Its function is as follows. Component of the cytochrome b6-f complex, which mediates electron transfer between photosystem II (PSII) and photosystem I (PSI), cyclic electron flow around PSI, and state transitions. This Prochlorococcus marinus subsp. pastoris (strain CCMP1986 / NIES-2087 / MED4) protein is Cytochrome b6-f complex subunit 4.